Here is a 287-residue protein sequence, read N- to C-terminus: Pyridoxal 5'-phosphate synthase subunit PdxS (287 aa).

Residue aspartate 21 coordinates D-ribose 5-phosphate. The Schiff-base intermediate with D-ribose 5-phosphate role is filled by lysine 78. Glycine 150 provides a ligand contact to D-ribose 5-phosphate. A D-glyceraldehyde 3-phosphate-binding site is contributed by arginine 162. Residues glycine 211 and 232-233 (GS) each bind D-ribose 5-phosphate.

Belongs to the PdxS/SNZ family. As to quaternary structure, in the presence of PdxT, forms a dodecamer of heterodimers.

The catalysed reaction is aldehydo-D-ribose 5-phosphate + D-glyceraldehyde 3-phosphate + L-glutamine = pyridoxal 5'-phosphate + L-glutamate + phosphate + 3 H2O + H(+). It participates in cofactor biosynthesis; pyridoxal 5'-phosphate biosynthesis. Functionally, catalyzes the formation of pyridoxal 5'-phosphate from ribose 5-phosphate (RBP), glyceraldehyde 3-phosphate (G3P) and ammonia. The ammonia is provided by the PdxT subunit. Can also use ribulose 5-phosphate and dihydroxyacetone phosphate as substrates, resulting from enzyme-catalyzed isomerization of RBP and G3P, respectively. In Francisella philomiragia subsp. philomiragia (strain ATCC 25017 / CCUG 19701 / FSC 153 / O#319-036), this protein is Pyridoxal 5'-phosphate synthase subunit PdxS.